A 422-amino-acid polypeptide reads, in one-letter code: UPF0761 membrane protein LHK_02978 (422 aa).

6 helical membrane-spanning segments follow: residues 44-64 (LLSLVPLITITLIVVAAFPVF), 102-122 (LTAVGLALLAFTSLSLMLTID), 141-161 (MLVYWTVLTLGPLLLGVGISG), 178-198 (LAGIIQNLGSLTLATVMLTVL), 212-232 (ALIGGALTALTLGVAQAGFGL), and 246-266 (AFATFPFLLIWLQLMWLTVLI).

It belongs to the UPF0761 family.

It localises to the cell inner membrane. This is UPF0761 membrane protein LHK_02978 from Laribacter hongkongensis (strain HLHK9).